We begin with the raw amino-acid sequence, 78 residues long: Large ribosomal subunit protein bL28 (78 aa).

The protein belongs to the bacterial ribosomal protein bL28 family.

In Aromatoleum aromaticum (strain DSM 19018 / LMG 30748 / EbN1) (Azoarcus sp. (strain EbN1)), this protein is Large ribosomal subunit protein bL28.